A 291-amino-acid chain; its full sequence is Venom metalloproteinase inhibitor DM43 (291 aa).

Ig-like V-type domains lie at 22 to 79 (TNVT…ILTS) and 114 to 171 (GLET…PASA). N-linked (GlcNAc...) asparagine glycosylation occurs at asparagine 23. 2 disulfides stabilise this stretch: cysteine 28–cysteine 74 and cysteine 121–cysteine 163. Residues asparagine 156, asparagine 160, and asparagine 175 are each glycosylated (N-linked (GlcNAc...) asparagine). The 98-residue stretch at 191–288 (PKANFYILND…DSNVLELDLS (98 aa)) folds into the Ig-like V-type 3 domain. Cysteine 213 and cysteine 265 are disulfide-bonded.

In terms of assembly, homodimer. N-glycosylated. In terms of tissue distribution, blood and milk.

Its function is as follows. Metalloproteinase inhibitor. This Didelphis marsupialis (Southern opossum) protein is Venom metalloproteinase inhibitor DM43.